Reading from the N-terminus, the 406-residue chain is Phosphopentomutase (406 aa).

6 residues coordinate Mn(2+): D10, D305, H310, D346, H347, and H358.

Belongs to the phosphopentomutase family. Mn(2+) is required as a cofactor.

It is found in the cytoplasm. The enzyme catalyses 2-deoxy-alpha-D-ribose 1-phosphate = 2-deoxy-D-ribose 5-phosphate. The catalysed reaction is alpha-D-ribose 1-phosphate = D-ribose 5-phosphate. It functions in the pathway carbohydrate degradation; 2-deoxy-D-ribose 1-phosphate degradation; D-glyceraldehyde 3-phosphate and acetaldehyde from 2-deoxy-alpha-D-ribose 1-phosphate: step 1/2. Isomerase that catalyzes the conversion of deoxy-ribose 1-phosphate (dRib-1-P) and ribose 1-phosphate (Rib-1-P) to deoxy-ribose 5-phosphate (dRib-5-P) and ribose 5-phosphate (Rib-5-P), respectively. The chain is Phosphopentomutase from Agrobacterium fabrum (strain C58 / ATCC 33970) (Agrobacterium tumefaciens (strain C58)).